The sequence spans 871 residues: Protein pob1 (871 aa).

The SH3 domain occupies 2 to 65 (ASQRFVIALH…PASHVELISD (64 aa)). The tract at residues 42–168 (WWEGEDEQGN…PSSDLSNFNT (127 aa)) is disordered. The segment covering 62–80 (LISDERSDSSDSRRGKEDF) has biased composition (basic and acidic residues). Low complexity-rich tracts occupy residues 88 to 100 (TRSSLSSSRSTSS) and 109 to 124 (LYSNNSLSSSHSSILN). The span at 131–168 (SKPSVPSNFNSMFPSSKQEGPSPLLDNQPSSDLSNFNT) shows a compositional bias: polar residues. Residues S224 and S225 each carry the phosphoserine modification. The residue at position 229 (Y229) is a Phosphotyrosine. S241 bears the Phosphoserine mark. The SAM domain occupies 250 to 313 (WSTEEVVEWL…LRKIQQLKDS (64 aa)). Low complexity predominate over residues 329–343 (ISVSQSSDSSSSIPK). Disordered regions lie at residues 329-371 (ISVS…NRPT) and 384-670 (PDLD…KSKR). Composition is skewed to polar residues over residues 384–395 (PDLDSSPSTDWN) and 404–451 (TPSS…NSGL). S433, S439, and S440 each carry phosphoserine. At T442 the chain carries Phosphothreonine. Phosphoserine is present on S444. Residues 456-467 (TEPISSPSTSSI) are compositionally biased toward low complexity. The span at 492–511 (QPSSNVPTKFTGGASESSSV) shows a compositional bias: polar residues. The residue at position 549 (S549) is a Phosphoserine. Residues 549-560 (SPSSISSRLPSS) are compositionally biased toward low complexity. Composition is skewed to polar residues over residues 561–574 (NLEQGSSSSVTKSP) and 583–606 (KASSPVTSKGVSINEKSAVNNYAT). A PH domain is found at 698 to 808 (TADCHGWMRK…WSSAFLKATV (111 aa)).

The protein resides in the cytoplasm. Its subcellular location is the membrane. Its function is as follows. Has a role in cell elongation and separation. This Schizosaccharomyces pombe (strain 972 / ATCC 24843) (Fission yeast) protein is Protein pob1 (pob1).